The following is a 347-amino-acid chain: N-acetyl-gamma-glutamyl-phosphate reductase (347 aa).

Cys-152 is an active-site residue.

This sequence belongs to the NAGSA dehydrogenase family. Type 1 subfamily.

It is found in the cytoplasm. The enzyme catalyses N-acetyl-L-glutamate 5-semialdehyde + phosphate + NADP(+) = N-acetyl-L-glutamyl 5-phosphate + NADPH + H(+). It functions in the pathway amino-acid biosynthesis; L-arginine biosynthesis; N(2)-acetyl-L-ornithine from L-glutamate: step 3/4. In terms of biological role, catalyzes the NADPH-dependent reduction of N-acetyl-5-glutamyl phosphate to yield N-acetyl-L-glutamate 5-semialdehyde. The chain is N-acetyl-gamma-glutamyl-phosphate reductase from Neisseria gonorrhoeae (strain ATCC 700825 / FA 1090).